Reading from the N-terminus, the 789-residue chain is Polyribonucleotide nucleotidyltransferase (789 aa).

The Mg(2+) site is built by aspartate 494 and aspartate 500. Residues 561–620 form the KH domain; the sequence is PRIESIFINKDKIRNVIGSGGKNIREICEKTGARVEIMQDGTVMIYAINNDAVEYAKNMI. One can recognise an S1 motif domain in the interval 630-697; it reads GKVFDGTVIE…DREYVQLSMR (68 aa). Residues 709–789 are disordered; it reads GELYNIRKTN…NEVPRKPRFF (81 aa). A compositionally biased stretch (basic residues) spans 737-749; it reads SEKKRRGSGRSRR. Positions 763–780 are enriched in low complexity; sequence NNGFGNGNRSFNDNRNGN.

This sequence belongs to the polyribonucleotide nucleotidyltransferase family. Mg(2+) serves as cofactor.

The protein localises to the cytoplasm. The catalysed reaction is RNA(n+1) + phosphate = RNA(n) + a ribonucleoside 5'-diphosphate. Its function is as follows. Involved in mRNA degradation. Catalyzes the phosphorolysis of single-stranded polyribonucleotides processively in the 3'- to 5'-direction. This Ehrlichia ruminantium (strain Welgevonden) protein is Polyribonucleotide nucleotidyltransferase.